The sequence spans 121 residues: Large ribosomal subunit protein uL14 (121 aa).

This sequence belongs to the universal ribosomal protein uL14 family. In terms of assembly, part of the 50S ribosomal subunit. Forms a cluster with proteins L3 and L19. In the 70S ribosome, L14 and L19 interact and together make contacts with the 16S rRNA in bridges B5 and B8.

In terms of biological role, binds to 23S rRNA. Forms part of two intersubunit bridges in the 70S ribosome. This is Large ribosomal subunit protein uL14 from Synechococcus sp. (strain CC9902).